Here is a 328-residue protein sequence, read N- to C-terminus: MEKVEAVTVSNVDPYRRILNKVVSQLLLDKGAGQASNHSLETLTQMLQALIWEIGNSAHNYCELSGRTMPTVGDVSLALINMGISISNLDPYMRKETHVPIPLPPQQTQQRPLSLLQAGIKAPHPHYVPSYFPPMPDPHAYIRTPTHKQPVTEYEAIREKAACQKRDIEKALTKFLCKTTETNNLFPTEDNMFPLIACKPAFPPYAAALNPTDQVFDFEELEYHYLVANRTEDEPSKDDGEEGDSENEEMDGDKSKEEKPELDIKPNSNTNKAILENPNIDNPYLRAATLPKRSKNCPTPGTMPSRSLATTAPTIRTPSTLEITKTNL.

The Histone-fold domain maps to 16–83 (RRILNKVVSQ…DVSLALINMG (68 aa)). The tract at residues 229-309 (NRTEDEPSKD…PGTMPSRSLA (81 aa)) is disordered. Phosphoserine occurs at positions 236, 245, and 255. The segment covering 239–251 (DGEEGDSENEEMD) has biased composition (acidic residues). A compositionally biased stretch (basic and acidic residues) spans 252 to 264 (GDKSKEEKPELDI). Residues 296 to 309 (NCPTPGTMPSRSLA) show a composition bias toward polar residues.

It belongs to the TAF8 family. As to quaternary structure, belongs to the TFIID complex which is composed of TATA binding protein (Tbp) and a number of TBP-associated factors (TAFs). Histone fold interacts with N-terminus of Taf10b.

The protein resides in the nucleus. TFIID is a multimeric protein complex that plays a central role in mediating promoter responses to various activators and repressors. This Drosophila melanogaster (Fruit fly) protein is Transcription initiation factor TFIID subunit 8.